The chain runs to 404 residues: Phosphoglycerate kinase (404 aa).

Residues 26–28 (DFN), R41, 64–67 (HLGR), R124, and R161 each bind substrate. ATP is bound by residues K212, G301, E332, and 359 to 362 (GGDS).

This sequence belongs to the phosphoglycerate kinase family. As to quaternary structure, monomer.

The protein resides in the cytoplasm. The enzyme catalyses (2R)-3-phosphoglycerate + ATP = (2R)-3-phospho-glyceroyl phosphate + ADP. It participates in carbohydrate degradation; glycolysis; pyruvate from D-glyceraldehyde 3-phosphate: step 2/5. The chain is Phosphoglycerate kinase from Mesomycoplasma hyopneumoniae (strain 232) (Mycoplasma hyopneumoniae).